The following is a 316-amino-acid chain: MFNRMTSLWMGDLDPYMDENFIKQAFSTMGETAFGVKIITHRVTGGSAGYCFVEMADEASVDRCVQRLNGKLVPGSNPPRKFKLNYATYGKRPEPGPEFSVFVGDLTSEVDDYQLHQFFLKKFPSCKGAKVVTDPYGNSRGYGFVKFSDENEQKKALEEFQNASGLGGKPIRISIAVNKGNKASTYHNQNNTYNTNYQQQYYRQPYNSYYPQWGYDQYSGYNYGYNPYAAPPPMMGPPPPMGMPPMPPDMQGSTEAHDGTEEVEEDPSEDPNPQVDVEELNRQYMERSEELYDSLMECHWLPMDTITSDISMMNGS.

2 consecutive RRM domains span residues 6–89 and 99–178; these read TSLW…YATY and FSVF…IAVN. Pro residues predominate over residues 239–248; it reads PPMGMPPMPP. A disordered region spans residues 239–285; the sequence is PPMGMPPMPPDMQGSTEAHDGTEEVEEDPSEDPNPQVDVEELNRQYM.

This sequence belongs to the RRM TRSPAP family.

It localises to the nucleus. The protein resides in the cytoplasm. Functionally, involved in the early steps of selenocysteine biosynthesis and tRNA(Sec) charging to the later steps resulting in the cotranslational incorporation of selenocysteine into selenoproteins. The polypeptide is tRNA selenocysteine 1-associated protein 1-like (trnau1apl) (Danio rerio (Zebrafish)).